We begin with the raw amino-acid sequence, 89 residues long: DNA-directed RNA polymerase subunit Rpo6 (89 aa).

The protein belongs to the archaeal Rpo6/eukaryotic RPB6 RNA polymerase subunit family. As to quaternary structure, part of the RNA polymerase complex.

It localises to the cytoplasm. It catalyses the reaction RNA(n) + a ribonucleoside 5'-triphosphate = RNA(n+1) + diphosphate. Its function is as follows. DNA-dependent RNA polymerase (RNAP) catalyzes the transcription of DNA into RNA using the four ribonucleoside triphosphates as substrates. The sequence is that of DNA-directed RNA polymerase subunit Rpo6 from Aeropyrum pernix (strain ATCC 700893 / DSM 11879 / JCM 9820 / NBRC 100138 / K1).